The primary structure comprises 181 residues: UPF0302 protein LMHCC_0635 (181 aa).

This sequence belongs to the UPF0302 family.

The chain is UPF0302 protein LMHCC_0635 from Listeria monocytogenes serotype 4a (strain HCC23).